Consider the following 154-residue polypeptide: Style cell-cycle inhibitor 1-A (154 aa).

Composition is skewed to basic and acidic residues over residues 1 to 11 and 24 to 48; these read MGSDKKTPEEK and DEVK…DKSK. A disordered region spans residues 1–84; that stretch reads MGSDKKTPEE…DKSKNKFEEL (84 aa). Residues 63 to 77 show a composition bias toward basic residues; sequence GEKHKTKSHKHKDKS.

Specifically expressed in flowers pistils, especially in stigmas and styles. Barely detected in roots, stems, leaves, sepals, petals and stamen.

It is found in the nucleus. Functionally, component of the auxin signaling transduction pathway that regulates cell proliferation and differentiation during flowers stigmas and styles development. Involved in the regulation of auxin-related genes. This Nicotiana tabacum (Common tobacco) protein is Style cell-cycle inhibitor 1-A.